The chain runs to 481 residues: Proline--tRNA ligase (481 aa).

This sequence belongs to the class-II aminoacyl-tRNA synthetase family. ProS type 3 subfamily. In terms of assembly, homodimer.

The protein resides in the cytoplasm. It carries out the reaction tRNA(Pro) + L-proline + ATP = L-prolyl-tRNA(Pro) + AMP + diphosphate. Its function is as follows. Catalyzes the attachment of proline to tRNA(Pro) in a two-step reaction: proline is first activated by ATP to form Pro-AMP and then transferred to the acceptor end of tRNA(Pro). This is Proline--tRNA ligase from Chlorobium limicola (strain DSM 245 / NBRC 103803 / 6330).